Here is a 548-residue protein sequence, read N- to C-terminus: Rop guanine nucleotide exchange factor 1 (548 aa).

A compositionally biased stretch (acidic residues) spans 1-12 (MGSLSSEEDDEV). Residues 1–38 (MGSLSSEEDDEVSSERCGSYSPSADISESESSSSFSCH) form a disordered region. Residues 19–36 (SYSPSADISESESSSSFS) are compositionally biased toward low complexity. The PRONE domain maps to 81–462 (DKQPDNDLSE…DAMRRSISVT (382 aa)). The interval 458–548 (SISVTESLSL…RVTGVTPERD (91 aa)) is involved in auto-inhibition. Residues Ser460 and Ser480 each carry the phosphoserine modification.

In terms of assembly, interacts with ARAC10/ROP11 and FER. Forms a complex with ARAC11/ROP1 and PRK2. Interacts in vitro (via PRONE domain) with PRK1, PRK2, PRK3 and PRK4. The C-terminal region is also important for the interaction with PRK2. In terms of processing, phosphorylated at Ser-460 and Ser-480 by PRK2. In terms of tissue distribution, expressed in roots, cotyledons, leaves, stems, sepals, petals, anthers, pollen grains, stigmas and siliques.

The protein resides in the cytoplasm. It is found in the cytosol. It localises to the cell membrane. With respect to regulation, phosphorylation at Ser-460 and Ser-480 by PRK2 releases ROPGEF1 auto-inhibition, thereby activating ROPGEF1, which in turn activates ARAC11/ROP1. In terms of biological role, guanine-nucleotide exchange factor (GEF) that acts as an activator of Rop (Rho of plants) GTPases by promoting the exchange of GDP for GTP. Acts downstream of PRK2 in the control of polarized pollen tube growth by activating ARAC11/ROP1. In association with ROPGEF4, acts as a specific regulator of ARAC10/ROP11 function in ABA-mediated stomatal closure. May play a role in the Rac/Rop-signaling pathway that controls ROS-mediated root hair development. The polypeptide is Rop guanine nucleotide exchange factor 1 (ROPGEF1) (Arabidopsis thaliana (Mouse-ear cress)).